Consider the following 355-residue polypeptide: Uroporphyrinogen decarboxylase (355 aa).

Substrate is bound by residues 27–31 (RQAGR), aspartate 77, tyrosine 154, threonine 209, and histidine 328.

It belongs to the uroporphyrinogen decarboxylase family. Homodimer.

It localises to the cytoplasm. It carries out the reaction uroporphyrinogen III + 4 H(+) = coproporphyrinogen III + 4 CO2. It participates in porphyrin-containing compound metabolism; protoporphyrin-IX biosynthesis; coproporphyrinogen-III from 5-aminolevulinate: step 4/4. In terms of biological role, catalyzes the decarboxylation of four acetate groups of uroporphyrinogen-III to yield coproporphyrinogen-III. The protein is Uroporphyrinogen decarboxylase of Photobacterium profundum (strain SS9).